Here is a 373-residue protein sequence, read N- to C-terminus: Spore coat polysaccharide biosynthesis protein SpsE (373 aa).

The AFP-like domain maps to 305 to 367 (GIFTTAPIQK…GIVWDDILLK (63 aa)).

It participates in spore coat biogenesis; spore coat polysaccharide biosynthesis. The polypeptide is Spore coat polysaccharide biosynthesis protein SpsE (spsE) (Bacillus subtilis (strain 168)).